Consider the following 398-residue polypeptide: Histone-lysine N-methyltransferase ASHR2 (398 aa).

The region spanning 11–270 is the SET domain; sequence TLLRVAEIGG…EGREVCLSYF (260 aa).

This sequence belongs to the class V-like SAM-binding methyltransferase superfamily. Histone-lysine methyltransferase family. SET2 subfamily.

The protein resides in the nucleus. Its subcellular location is the chromosome. The enzyme catalyses L-lysyl-[histone] + S-adenosyl-L-methionine = N(6)-methyl-L-lysyl-[histone] + S-adenosyl-L-homocysteine + H(+). Its function is as follows. Histone methyltransferase. The polypeptide is Histone-lysine N-methyltransferase ASHR2 (ASHR2) (Arabidopsis thaliana (Mouse-ear cress)).